Here is a 245-residue protein sequence, read N- to C-terminus: Ribonuclease 3 (245 aa).

One can recognise an RNase III domain in the interval 17–146; the sequence is FTDKMKSLGL…FVGALYLDQG (130 aa). Glu-59 serves as a coordination point for Mg(2+). Asp-63 is an active-site residue. Mg(2+) is bound by residues Asp-132 and Glu-135. Glu-135 is a catalytic residue. The DRBM domain occupies 172–241; the sequence is DFKTQFQEYV…AEQAYKLMKN (70 aa).

Belongs to the ribonuclease III family. In terms of assembly, homodimer. Requires Mg(2+) as cofactor.

The protein localises to the cytoplasm. The catalysed reaction is Endonucleolytic cleavage to 5'-phosphomonoester.. In terms of biological role, digests double-stranded RNA. Involved in the processing of primary rRNA transcript to yield the immediate precursors to the large and small rRNAs (23S and 16S). Processes some mRNAs, and tRNAs when they are encoded in the rRNA operon. Processes pre-crRNA and tracrRNA of type II CRISPR loci if present in the organism. This is Ribonuclease 3 from Staphylococcus epidermidis (strain ATCC 12228 / FDA PCI 1200).